The sequence spans 35 residues: Manganese peroxidase (35 aa).

Residues 1–11 are compositionally biased toward basic and acidic residues; it reads LSLLGHDERVT. The tract at residues 1-35 is disordered; it reads LSLLGHDERVTPEPFDSVTAQNARGNQADVQSLPR. Residues 18 to 35 are compositionally biased toward polar residues; sequence VTAQNARGNQADVQSLPR.

It belongs to the peroxidase family. It depends on heme b as a cofactor. The cofactor is Ca(2+).

It catalyses the reaction 2 Mn(2+) + H2O2 + 2 H(+) = 2 Mn(3+) + 2 H2O. Functionally, has manganese peroxidase activity. The protein is Manganese peroxidase of Irpex lacteus (Milk-white toothed polypore).